Here is a 322-residue protein sequence, read N- to C-terminus: MSSKPQSIGVIGAPFSKGQPRGGVEEGPTVLRKAGLLEKLKELECDVKDYGDLSFADNLDDSPFQIVKNPRCVGKASEKLADVVAEVKKTGRISLVLGGDHSLAIGSISGHARVHPDLCVIWVDAHTDINTPLTTKTGNLHGQPVSFLLKELKEKMPEVPGFYWVAPCISAKDIVYIGLRDVDPGEHYILKTLGIKYFSMTEVDKLGIGKVMEETFSYLLGRKKRPIHLSFDVDGLDPSFTPATGTPVQGGLTYREGLYITEEIYKTGLLSGLDIMEVNPSLGKTPEEVTRTVNTTVAITMACFGVAREGNHKPIDYLSPPK.

Positions 1–27 (MSSKPQSIGVIGAPFSKGQPRGGVEEG) are disordered. Ser-7 carries the phosphoserine modification. Residue Lys-17 is modified to N6-succinyllysine. Ser-62 is subject to Phosphoserine. Lys-75 bears the N6-succinyllysine mark. Residues His-101, Asp-124, His-126, and Asp-128 each contribute to the Mn(2+) site. Substrate is bound by residues 126 to 130 (HTDIN), 137 to 139 (TGN), and Asp-183. At Ser-217 the chain carries Phosphoserine. Residues Asp-232 and Asp-234 each coordinate Mn(2+). Substrate-binding residues include Thr-246 and Glu-277.

It belongs to the arginase family. In terms of assembly, homotrimer. Interacts with CMTM6. Requires Mn(2+) as cofactor.

It localises to the cytoplasm. It catalyses the reaction L-arginine + H2O = urea + L-ornithine. The protein operates within nitrogen metabolism; urea cycle; L-ornithine and urea from L-arginine: step 1/1. In Bos taurus (Bovine), this protein is Arginase-1 (ARG1).